The chain runs to 99 residues: Large ribosomal subunit protein uL23 (99 aa).

This sequence belongs to the universal ribosomal protein uL23 family. Part of the 50S ribosomal subunit. Contacts protein L29, and trigger factor when it is bound to the ribosome.

Its function is as follows. One of the early assembly proteins it binds 23S rRNA. One of the proteins that surrounds the polypeptide exit tunnel on the outside of the ribosome. Forms the main docking site for trigger factor binding to the ribosome. This Oenococcus oeni (strain ATCC BAA-331 / PSU-1) protein is Large ribosomal subunit protein uL23.